The chain runs to 321 residues: CRISPR-associated endonuclease Cas1 2 (321 aa).

Residues glutamate 150, histidine 213, and glutamate 228 each contribute to the Mn(2+) site.

It belongs to the CRISPR-associated endonuclease Cas1 family. Homodimer, forms a heterotetramer with a Cas2 homodimer. The cofactor is Mg(2+). Mn(2+) serves as cofactor.

Its function is as follows. CRISPR (clustered regularly interspaced short palindromic repeat), is an adaptive immune system that provides protection against mobile genetic elements (viruses, transposable elements and conjugative plasmids). CRISPR clusters contain spacers, sequences complementary to antecedent mobile elements, and target invading nucleic acids. CRISPR clusters are transcribed and processed into CRISPR RNA (crRNA). Acts as a dsDNA endonuclease. Involved in the integration of spacer DNA into the CRISPR cassette. This chain is CRISPR-associated endonuclease Cas1 2, found in Moorella thermoacetica (strain ATCC 39073 / JCM 9320).